The sequence spans 44 residues: Small, acid-soluble spore protein P (44 aa).

The disordered stretch occupies residues Met-1–Met-44. Residues Asn-8 to Gln-18 show a composition bias toward basic and acidic residues. Residues His-26–Met-44 show a composition bias toward basic residues.

Belongs to the SspP family.

The protein resides in the spore core. The sequence is that of Small, acid-soluble spore protein P from Bacillus cereus (strain ATCC 14579 / DSM 31 / CCUG 7414 / JCM 2152 / NBRC 15305 / NCIMB 9373 / NCTC 2599 / NRRL B-3711).